Consider the following 457-residue polypeptide: Cytochrome b-c1 complex subunit 1, mitochondrial (457 aa).

The transit peptide at 1 to 26 (MLRTVTSKTVSNQFKRSLATAVATPK) directs the protein to the mitochondrion.

This sequence belongs to the peptidase M16 family. UQCRC1/QCR1 subfamily. Component of the ubiquinol-cytochrome c oxidoreductase (cytochrome b-c1 complex, complex III, CIII), a multisubunit enzyme composed of 10 subunits. The complex is composed of 3 respiratory subunits cytochrome b (COB), cytochrome c1 (CYT1) and Rieske protein (RIP1), 2 core protein subunits COR1 and QCR2, and 5 low-molecular weight protein subunits QCR6, QCR7, QCR8, QCR9 and QCR10. The complex exists as an obligatory dimer and forms supercomplexes (SCs) in the inner mitochondrial membrane with a monomer or a dimer of cytochrome c oxidase (complex IV, CIV), resulting in 2 different assemblies (supercomplexes III(2)IV and III(2)IV(2)). COR1 interacts with COX5A at the CIII-CIV interface.

Its subcellular location is the mitochondrion inner membrane. In terms of biological role, component of the ubiquinol-cytochrome c oxidoreductase, a multisubunit transmembrane complex that is part of the mitochondrial electron transport chain which drives oxidative phosphorylation. The respiratory chain contains 3 multisubunit complexes succinate dehydrogenase (complex II, CII), ubiquinol-cytochrome c oxidoreductase (cytochrome b-c1 complex, complex III, CIII) and cytochrome c oxidase (complex IV, CIV), that cooperate to transfer electrons derived from NADH and succinate to molecular oxygen, creating an electrochemical gradient over the inner membrane that drives transmembrane transport and the ATP synthase. The cytochrome b-c1 complex catalyzes electron transfer from ubiquinol to cytochrome c, linking this redox reaction to translocation of protons across the mitochondrial inner membrane, with protons being carried across the membrane as hydrogens on the quinol. In the process called Q cycle, 2 protons are consumed from the matrix, 4 protons are released into the intermembrane space and 2 electrons are passed to cytochrome c. This chain is Cytochrome b-c1 complex subunit 1, mitochondrial (COR1), found in Saccharomyces cerevisiae (strain ATCC 204508 / S288c) (Baker's yeast).